The primary structure comprises 250 residues: Coproheme decarboxylase (250 aa).

Fe-coproporphyrin III is bound by residues Arg131, 145 to 149 (YPMNK), His172, and Gln185. Tyr145 is an active-site residue.

The protein belongs to the ChdC family. Type 1 subfamily. Requires Fe-coproporphyrin III as cofactor.

It carries out the reaction Fe-coproporphyrin III + 2 H2O2 + 2 H(+) = heme b + 2 CO2 + 4 H2O. The enzyme catalyses Fe-coproporphyrin III + H2O2 + H(+) = harderoheme III + CO2 + 2 H2O. It catalyses the reaction harderoheme III + H2O2 + H(+) = heme b + CO2 + 2 H2O. It participates in porphyrin-containing compound metabolism; protoheme biosynthesis. Its function is as follows. Involved in coproporphyrin-dependent heme b biosynthesis. Catalyzes the decarboxylation of Fe-coproporphyrin III (coproheme) to heme b (protoheme IX), the last step of the pathway. The reaction occurs in a stepwise manner with a three-propionate intermediate. In Staphylococcus aureus (strain USA300 / TCH1516), this protein is Coproheme decarboxylase.